The sequence spans 794 residues: Phosphoenolpyruvate synthase (794 aa).

His422 functions as the Tele-phosphohistidine intermediate in the catalytic mechanism. Arg512, Arg579, Glu681, Gly702, Ser703, Asn704, and Asp705 together coordinate substrate. Glu681 serves as a coordination point for Mg(2+). Asp705 serves as a coordination point for Mg(2+). Cys752 serves as the catalytic Proton donor.

The protein belongs to the PEP-utilizing enzyme family. Mg(2+) serves as cofactor.

It catalyses the reaction pyruvate + ATP + H2O = phosphoenolpyruvate + AMP + phosphate + 2 H(+). The protein operates within carbohydrate biosynthesis; gluconeogenesis. Catalyzes the phosphorylation of pyruvate to phosphoenolpyruvate. The polypeptide is Phosphoenolpyruvate synthase (ppsA) (Neisseria meningitidis serogroup B (strain ATCC BAA-335 / MC58)).